The sequence spans 132 residues: Small ribosomal subunit protein uS19 (132 aa).

This sequence belongs to the universal ribosomal protein uS19 family. Part of the 30S ribosomal subunit.

Protein S19 forms a complex with S13 that binds strongly to the 16S ribosomal RNA. In Pyrococcus furiosus (strain ATCC 43587 / DSM 3638 / JCM 8422 / Vc1), this protein is Small ribosomal subunit protein uS19.